The following is a 371-amino-acid chain: 4-hydroxy-3-methylbut-2-en-1-yl diphosphate synthase (flavodoxin) (371 aa).

[4Fe-4S] cluster contacts are provided by C270, C273, C305, and E312.

The protein belongs to the IspG family. Requires [4Fe-4S] cluster as cofactor.

It carries out the reaction (2E)-4-hydroxy-3-methylbut-2-enyl diphosphate + oxidized [flavodoxin] + H2O + 2 H(+) = 2-C-methyl-D-erythritol 2,4-cyclic diphosphate + reduced [flavodoxin]. It participates in isoprenoid biosynthesis; isopentenyl diphosphate biosynthesis via DXP pathway; isopentenyl diphosphate from 1-deoxy-D-xylulose 5-phosphate: step 5/6. In terms of biological role, converts 2C-methyl-D-erythritol 2,4-cyclodiphosphate (ME-2,4cPP) into 1-hydroxy-2-methyl-2-(E)-butenyl 4-diphosphate. The sequence is that of 4-hydroxy-3-methylbut-2-en-1-yl diphosphate synthase (flavodoxin) from Chromohalobacter salexigens (strain ATCC BAA-138 / DSM 3043 / CIP 106854 / NCIMB 13768 / 1H11).